The primary structure comprises 419 residues: Endochitinase 2 (419 aa).

Positions 1-18 (MHHLRALVGVGLAGLAAG) are cleaved as a signal peptide. Residues 35–343 (AQNVVYWGQN…QQAKSILVNG (309 aa)) enclose the GH18 domain. Asn153 carries N-linked (GlcNAc...) asparagine glycosylation. Residue Glu173 is the Proton donor of the active site. N-linked (GlcNAc...) asparagine glycosylation is found at Asn237 and Asn256. The span at 350 to 381 (GPPSSTPATAPAPTATTMPSSTSVSSPAASPT) shows a compositional bias: low complexity. A disordered region spans residues 350-386 (GPPSSTPATAPAPTATTMPSSTSVSSPAASPTGGTVP). Residues 383 to 419 (GTVPQWGQCGGEGYSGPTQCVAPYQCVKQGDWWSSCR) form the CBM1 domain.

This sequence belongs to the glycosyl hydrolase 18 family. Chitinase class III subfamily.

It is found in the secreted. The enzyme catalyses Random endo-hydrolysis of N-acetyl-beta-D-glucosaminide (1-&gt;4)-beta-linkages in chitin and chitodextrins.. Secreted chitinase involved in the degradation of chitin, a component of the cell walls of fungi and exoskeletal elements of some animals (including worms and arthropods). Participates in the infection process and directly acts in the penetration process of the host cuticle. This chain is Endochitinase 2 (chi2), found in Metarhizium robertsii (strain ARSEF 23 / ATCC MYA-3075) (Metarhizium anisopliae (strain ARSEF 23)).